The primary structure comprises 313 residues: 2-phosphoglycerate kinase (313 aa).

An ATP-cone domain is found at 8 to 95 (SRILVKDKEY…LWRRVLKKHS (88 aa)).

The protein belongs to the 2-phosphoglycerate kinase family. A divalent metal cation serves as cofactor.

The enzyme catalyses (2R)-2-phosphoglycerate + ATP = (2R)-2,3-bisphosphoglycerate + ADP + H(+). The protein operates within thermoadapter biosynthesis; cyclic 2,3-diphosphoglycerate biosynthesis; cyclic 2,3-diphosphoglycerate from 2-phospho-D-glycerate: step 1/2. Its function is as follows. Catalyzes the phosphorylation of 2-phosphoglycerate to 2,3-diphosphoglycerate. Involved in the biosynthesis of cyclic 2,3-bisphosphoglycerate, a thermoprotectant. The polypeptide is 2-phosphoglycerate kinase (Methanococcus maripaludis (strain C5 / ATCC BAA-1333)).